Here is a 201-residue protein sequence, read N- to C-terminus: Ras-like GTP-binding protein YPT1 (201 aa).

Residues 15–23, 33–40, 63–67, 121–124, and 151–153 each bind GTP; these read GDSGVGKSC, YTESYIST, DTAGQ, NKSD, and SAK. An Effector region motif is present at residues 37-45; that stretch reads YISTIGVDF. 2 S-geranylgeranyl cysteine lipidation sites follow: cysteine 200 and cysteine 201.

Belongs to the small GTPase superfamily. Rab family.

It is found in the endoplasmic reticulum membrane. It localises to the golgi apparatus membrane. The protein localises to the cytoplasm. Its subcellular location is the preautophagosomal structure membrane. With respect to regulation, rab activation is generally mediated by a guanine exchange factor (GEF), while inactivation through hydrolysis of bound GTP is catalyzed by a GTPase activating protein (GAP). In terms of biological role, the small GTPases Rab are key regulators of intracellular membrane trafficking, from the formation of transport vesicles to their fusion with membranes. Rabs cycle between an inactive GDP-bound form and an active GTP-bound form that is able to recruit to membranes different set of downstream effectors directly responsible for vesicle formation, movement, tethering and fusion. YPT1 regulates the trafficking of secretory vesicles from the endoplasmic reticulum (ER) to the Golgi. Plays a role in the initial events of the autophagic vacuole development which take place at specialized regions of the endoplasmic reticulum. Also involved in the recycling of membrane proteins. This is Ras-like GTP-binding protein YPT1 (YPT1) from Phytophthora infestans (Potato late blight agent).